The sequence spans 387 residues: Apoptosis-inducing factor homolog B (387 aa).

FAD contacts are provided by residues 12–16, arginine 47, and aspartate 292; that span reads GGGYG.

This sequence belongs to the FAD-dependent oxidoreductase family. FAD is required as a cofactor.

Functionally, putative FAD-dependent oxidoreductase. The protein is Apoptosis-inducing factor homolog B (aifB) of Dictyostelium discoideum (Social amoeba).